A 152-amino-acid chain; its full sequence is MFP1 attachment factor 1 (152 aa).

Disordered regions lie at residues Met-1–Gln-33 and Asp-107–Pro-152. Residues Thr-12–Pro-115 form a WPP region. A compositionally biased stretch (polar residues) spans Glu-134–Pro-152.

In terms of assembly, interacts with WAP through its WPP domain. Binds to MFP1 and FPP proteins. Expressed in young tomato leaves, young fruits, and flowers (at protein level).

The protein resides in the nucleus envelope. The protein localises to the cytoplasm. Its subcellular location is the golgi apparatus. It is found in the nucleus. It localises to the nucleus matrix. This chain is MFP1 attachment factor 1 (MAF1), found in Solanum lycopersicum (Tomato).